Reading from the N-terminus, the 231-residue chain is Putative N-acetylmannosamine-6-phosphate 2-epimerase (231 aa).

The protein belongs to the NanE family.

It catalyses the reaction an N-acyl-D-glucosamine 6-phosphate = an N-acyl-D-mannosamine 6-phosphate. It functions in the pathway amino-sugar metabolism; N-acetylneuraminate degradation; D-fructose 6-phosphate from N-acetylneuraminate: step 3/5. Its function is as follows. Converts N-acetylmannosamine-6-phosphate (ManNAc-6-P) to N-acetylglucosamine-6-phosphate (GlcNAc-6-P). The protein is Putative N-acetylmannosamine-6-phosphate 2-epimerase of Listeria innocua serovar 6a (strain ATCC BAA-680 / CLIP 11262).